A 462-amino-acid polypeptide reads, in one-letter code: Protoheme IX farnesyltransferase, mitochondrial (462 aa).

Residues M1 to Q30 constitute a mitochondrion transit peptide. 7 helical membrane-spanning segments follow: residues T158–V178, L234–L254, I274–A294, L298–F318, Y352–Y372, Y373–W393, and F425–G445.

The protein belongs to the UbiA prenyltransferase family. As to quaternary structure, forms ~370 kDa homooligomeric complexes.

Its subcellular location is the mitochondrion. The protein resides in the mitochondrion membrane. It carries out the reaction heme b + (2E,6E)-farnesyl diphosphate + H2O = Fe(II)-heme o + diphosphate. It functions in the pathway porphyrin-containing compound metabolism; heme O biosynthesis; heme O from protoheme: step 1/1. Positively regulated by the hydroxylated intermediate (heme I) formed at the subsequent step, or by HAS/COX15 itself. Functionally, catalyzes the first reaction in the biosynthesis of heme A, a prosthetic group of mitochondrial cytochrome c oxidase (CcO). Heme A is synthesized from heme B by two sequential enzymatic reactions catalyzed by heme O synthase (HOS/COX10) and heme A synthase (HAS/COX15). HOS converts heme B (protoheme IX) to heme O by substitution of the vinyl group on carbon 2 of heme B porphyrin ring with a hydroxyethyl farnesyl side group. The protein is Protoheme IX farnesyltransferase, mitochondrial (COX10) of Saccharomyces cerevisiae (strain ATCC 204508 / S288c) (Baker's yeast).